Consider the following 249-residue polypeptide: Phycobilisome 27.9 kDa linker polypeptide, phycoerythrin-associated, rod (249 aa).

A PBS-linker domain is found at 2 to 166; sequence ASQTILELWP…LDRGPAQIDS (165 aa). The CpcD-like domain occupies 198–248; sequence EKRFKILVQGSKFDSPRRISTTEYIVPASKMTPQIQRINRTSGKIVSITEI.

This sequence belongs to the phycobilisome linker protein family. The phycobilisome is a hemidiscoidal structure that is composed of two distinct substructures: a core complex and six rods radiating from the core.

The protein resides in the cellular thylakoid membrane. Functionally, rod linker protein, associated with phycoerythrin. Linker polypeptides determine the state of aggregation and the location of the disk-shaped phycobiliprotein units within the phycobilisome and modulate their spectroscopic properties in order to mediate a directed and optimal energy transfer. The polypeptide is Phycobilisome 27.9 kDa linker polypeptide, phycoerythrin-associated, rod (cpeD) (Microchaete diplosiphon (Fremyella diplosiphon)).